Consider the following 236-residue polypeptide: Ubiquinone biosynthesis O-methyltransferase (236 aa).

4 residues coordinate S-adenosyl-L-methionine: Arg36, Gly56, Asp77, and Met125.

The protein belongs to the methyltransferase superfamily. UbiG/COQ3 family.

It catalyses the reaction a 3-demethylubiquinol + S-adenosyl-L-methionine = a ubiquinol + S-adenosyl-L-homocysteine + H(+). It carries out the reaction a 3-(all-trans-polyprenyl)benzene-1,2-diol + S-adenosyl-L-methionine = a 2-methoxy-6-(all-trans-polyprenyl)phenol + S-adenosyl-L-homocysteine + H(+). It participates in cofactor biosynthesis; ubiquinone biosynthesis. Its function is as follows. O-methyltransferase that catalyzes the 2 O-methylation steps in the ubiquinone biosynthetic pathway. The polypeptide is Ubiquinone biosynthesis O-methyltransferase (Haemophilus ducreyi (strain 35000HP / ATCC 700724)).